The following is a 311-amino-acid chain: Ribonuclease 3 (311 aa).

The RNase III domain maps to 20–145 (YLCFYRILGF…FIGAIYLDQG (126 aa)). E62 provides a ligand contact to Mg(2+). The active site involves D66. Mg(2+) is bound by residues N131 and E134. E134 is a catalytic residue. In terms of domain architecture, DRBM spans 173 to 242 (NFKSKLIEWS…AQMAIKKVKD (70 aa)). The segment at 250–311 (NEAKSQHSKP…EVEATETEKE (62 aa)) is disordered. Residues 262–288 (VETESVEPELTESETMEPDTLETEAPE) are compositionally biased toward acidic residues.

The protein belongs to the ribonuclease III family. Homodimer. The cofactor is Mg(2+).

It is found in the cytoplasm. The enzyme catalyses Endonucleolytic cleavage to 5'-phosphomonoester.. Functionally, digests double-stranded RNA. Involved in the processing of primary rRNA transcript to yield the immediate precursors to the large and small rRNAs (23S and 16S). Processes some mRNAs, and tRNAs when they are encoded in the rRNA operon. Processes pre-crRNA and tracrRNA of type II CRISPR loci if present in the organism. The protein is Ribonuclease 3 of Bacteroides thetaiotaomicron (strain ATCC 29148 / DSM 2079 / JCM 5827 / CCUG 10774 / NCTC 10582 / VPI-5482 / E50).